The chain runs to 115 residues: Large ribosomal subunit protein bL19 (115 aa).

The protein belongs to the bacterial ribosomal protein bL19 family.

Its function is as follows. This protein is located at the 30S-50S ribosomal subunit interface and may play a role in the structure and function of the aminoacyl-tRNA binding site. This chain is Large ribosomal subunit protein bL19, found in Erwinia tasmaniensis (strain DSM 17950 / CFBP 7177 / CIP 109463 / NCPPB 4357 / Et1/99).